The sequence spans 200 residues: UPF0301 protein BR0480/BS1330_I0481 (200 aa).

It belongs to the UPF0301 (AlgH) family.

In Brucella suis biovar 1 (strain 1330), this protein is UPF0301 protein BR0480/BS1330_I0481.